The chain runs to 441 residues: Xylose isomerase (441 aa).

Residues histidine 100 and aspartate 103 contribute to the active site. Glutamate 231, glutamate 267, histidine 270, aspartate 295, aspartate 306, aspartate 308, and aspartate 338 together coordinate Mg(2+).

It belongs to the xylose isomerase family. As to quaternary structure, homotetramer. Mg(2+) is required as a cofactor.

Its subcellular location is the cytoplasm. The enzyme catalyses alpha-D-xylose = alpha-D-xylulofuranose. The sequence is that of Xylose isomerase from Paraburkholderia phymatum (strain DSM 17167 / CIP 108236 / LMG 21445 / STM815) (Burkholderia phymatum).